The primary structure comprises 850 residues: Protein translocase subunit SecA (850 aa).

Residues Gln-87, 105–109, and Asp-494 each bind ATP; that span reads GEGKT. Residues Cys-834, Cys-836, Cys-845, and Cys-846 each coordinate Zn(2+).

The protein belongs to the SecA family. As to quaternary structure, monomer and homodimer. Part of the essential Sec protein translocation apparatus which comprises SecA, SecYEG and auxiliary proteins SecDF-YajC and YidC. The cofactor is Zn(2+).

It localises to the cell inner membrane. The protein localises to the cytoplasm. The enzyme catalyses ATP + H2O + cellular proteinSide 1 = ADP + phosphate + cellular proteinSide 2.. Functionally, part of the Sec protein translocase complex. Interacts with the SecYEG preprotein conducting channel. Has a central role in coupling the hydrolysis of ATP to the transfer of proteins into and across the cell membrane, serving as an ATP-driven molecular motor driving the stepwise translocation of polypeptide chains across the membrane. In Desulfotalea psychrophila (strain LSv54 / DSM 12343), this protein is Protein translocase subunit SecA.